A 306-amino-acid polypeptide reads, in one-letter code: Methylated RNA-binding protein 1 (306 aa).

In terms of domain architecture, YTH spans 155-290 (SRFFVIKSSS…SIGISIINLF (136 aa)). Residues 161–163 (KSS), N207, and W231 each bind RNA.

RNA-binding protein that acts as a post-transcriptional regulator of phosphate metabolism by binding to the 3'-UTR region of PHO4 mRNA, decreasing its stability. Acts by recognizing and binding N6-methyladenosine (m6A)-containing RNAs, a modification present at internal sites of mRNAs and some non-coding RNAs. This is Methylated RNA-binding protein 1 from Saccharomyces cerevisiae (strain ATCC 204508 / S288c) (Baker's yeast).